Here is a 968-residue protein sequence, read N- to C-terminus: uncharacterized protein (968 aa).

Disordered regions lie at residues 124-177, 348-437, 572-595, 608-627, and 837-877; these read SSIS…FSFP, QEDS…VNDS, TTTT…QQNT, PKAS…GSSK, and KASK…KKGK. The segment covering 131 to 157 has biased composition (polar residues); sequence TIESNYLSNPSSPCQSTPILESSTPFS. 3 stretches are compositionally biased toward low complexity: residues 158–177, 352–431, and 572–593; these read QKLM…FSFP, NNNN…NCNN, and TTTT…QQQQ. The span at 841-857 shows a compositional bias: low complexity; it reads DSSSSPTASSAAPGDSS.

This is an uncharacterized protein from Dictyostelium discoideum (Social amoeba).